The primary structure comprises 73 residues: Putative defensin-like protein 57 (73 aa).

The N-terminal stretch at 1–25 (MRFTSMIFVLVVILINSLFNFNVLA) is a signal peptide. 4 disulfide bridges follow: C37-C71, C41-C64, C50-C69, and C54-C70.

Belongs to the DEFL family.

Its subcellular location is the secreted. The sequence is that of Putative defensin-like protein 57 from Arabidopsis thaliana (Mouse-ear cress).